The sequence spans 254 residues: Alcohol dehydrogenase (254 aa).

NAD(+) is bound at residue 10 to 33 (FVAGLGGIGLDTSRELVKRNLKNL). Ser138 serves as a coordination point for substrate. Tyr151 functions as the Proton acceptor in the catalytic mechanism.

It belongs to the short-chain dehydrogenases/reductases (SDR) family. As to quaternary structure, homodimer.

The catalysed reaction is a primary alcohol + NAD(+) = an aldehyde + NADH + H(+). The enzyme catalyses a secondary alcohol + NAD(+) = a ketone + NADH + H(+). The sequence is that of Alcohol dehydrogenase (Adh) from Drosophila persimilis (Fruit fly).